Here is a 427-residue protein sequence, read N- to C-terminus: UPF0229 protein YeaH (427 aa).

The span at 79-90 shows a compositional bias: basic and acidic residues; it reads NDHFVQNDRIER. The disordered stretch occupies residues 79 to 110; that stretch reads NDHFVQNDRIERPQGGGGGSGSGQGQASQDGE. Gly residues predominate over residues 92-102; the sequence is QGGGGGSGSGQ.

The protein belongs to the UPF0229 family.

This is UPF0229 protein YeaH from Escherichia coli (strain K12 / MC4100 / BW2952).